Here is a 206-residue protein sequence, read N- to C-terminus: GCN5-like protein acetyltransferase Rv2170 (206 aa).

The region spanning 44–205 (EHIRRRGWQA…AFAILGRTLP (162 aa)) is the N-acetyltransferase domain. Tyr-176 functions as the Proton donor in the catalytic mechanism.

The protein belongs to the acetyltransferase family.

The enzyme catalyses L-lysyl-[protein] + acetyl-CoA = N(6)-acetyl-L-lysyl-[protein] + CoA + H(+). It catalyses the reaction propanoyl-CoA + L-lysyl-[protein] = N(6)-propanoyl-L-lysyl-[protein] + CoA + H(+). It carries out the reaction succinyl-CoA + L-lysyl-[protein] = N(6)-succinyl-L-lysyl-[protein] + CoA + H(+). Acetyltransferase involved in the post-translational regulation of the central metabolic enzyme isocitrate dehydrogenase 1 (ICDH-1) through lysine acetylation. Catalyzes the acetylation of ICDH-1 at Lys-30 and Lys-129, using acetyl-CoA as a donor, leading to a reduction of ICDH-1 enzyme activity. Can also use propionyl-CoA and succinyl-CoA as donors. Cannot act on the isocitrate dehydrogenase 2 (ICDH-2). Might play a role in regulating the TCA cycle and methylcitrate cycle when M.tuberculosis utilizes fatty acid as carbon source. Functionally, in addition, it can acetylate the amino group of isoniazid (INH), one of the first-line drugs used for the treatment of tuberculosis, thereby canceling out the drug toxicity. Acts by catalyzing the transfer of an acetyl group from acetyl-CoA to INH. Following acetylation, INH is broken down into isonicotinic acid and acetylhydrazine. M.smegmatis and M.tuberculosis H37Ra strains overexpressing Rv2170 are resistant to INH. Has little or no acetyltransferase activity with other antibiotics such as streptomycin, neomycin, kanamycin, amikacin, apramycin and gentamicin. The chain is GCN5-like protein acetyltransferase Rv2170 from Mycobacterium tuberculosis (strain ATCC 25618 / H37Rv).